We begin with the raw amino-acid sequence, 187 residues long: Large ribosomal subunit protein uL5 (187 aa).

It belongs to the universal ribosomal protein uL5 family. As to quaternary structure, part of the 50S ribosomal subunit; part of the 5S rRNA/L5/L18/L25 subcomplex. Contacts the 5S rRNA and the P site tRNA. Forms a bridge to the 30S subunit in the 70S ribosome.

Functionally, this is one of the proteins that bind and probably mediate the attachment of the 5S RNA into the large ribosomal subunit, where it forms part of the central protuberance. In the 70S ribosome it contacts protein S13 of the 30S subunit (bridge B1b), connecting the 2 subunits; this bridge is implicated in subunit movement. Contacts the P site tRNA; the 5S rRNA and some of its associated proteins might help stabilize positioning of ribosome-bound tRNAs. The protein is Large ribosomal subunit protein uL5 of Mycobacterium leprae (strain Br4923).